We begin with the raw amino-acid sequence, 323 residues long: Fructose-1,6-bisphosphatase class 1 (323 aa).

4 residues coordinate Mg(2+): glutamate 88, aspartate 107, leucine 109, and aspartate 110. Residues 110–113 (DGSS) and asparagine 200 each bind substrate. Glutamate 272 is a binding site for Mg(2+).

Belongs to the FBPase class 1 family. In terms of assembly, homotetramer. Mg(2+) serves as cofactor.

Its subcellular location is the cytoplasm. The catalysed reaction is beta-D-fructose 1,6-bisphosphate + H2O = beta-D-fructose 6-phosphate + phosphate. It functions in the pathway carbohydrate biosynthesis; gluconeogenesis. The chain is Fructose-1,6-bisphosphatase class 1 from Acinetobacter baylyi (strain ATCC 33305 / BD413 / ADP1).